The chain runs to 752 residues: Putative xanthine dehydrogenase molybdenum-binding subunit XdhA (752 aa).

Mo-molybdopterin contacts are provided by Q206, F237, R350, and A516.

It belongs to the xanthine dehydrogenase family. In terms of assembly, heterotrimer of XdhA, XdhB and XdhC. Requires Mo-molybdopterin as cofactor.

It carries out the reaction xanthine + NAD(+) + H2O = urate + NADH + H(+). The enzyme catalyses hypoxanthine + NAD(+) + H2O = xanthine + NADH + H(+). The protein operates within purine metabolism; hypoxanthine degradation; urate from hypoxanthine: step 1/2. It functions in the pathway purine metabolism; hypoxanthine degradation; urate from hypoxanthine: step 2/2. Functionally, presumed to be a dehydrogenase, but possibly an oxidase. Participates in limited purine salvage (requires aspartate) but does not support aerobic growth on purines as the sole carbon source (purine catabolism). Deletion results in increased adenine sensitivity, suggesting that this protein contributes to the conversion of adenine to guanine nucleotides during purine salvage. The protein is Putative xanthine dehydrogenase molybdenum-binding subunit XdhA (xdhA) of Escherichia coli (strain K12).